The chain runs to 444 residues: MARSRSRIDRTPFQTEILDLSHDGRGVARREGEGGKVTFVSGALPGEVVMAEQTARSRHFDEARTVEVLQASPQRVTPKCPHFGTCAGCVLQHLDEDQQIVAKQRVLMDNLERIGHVKPGKVLAPLVGESWGYRRKGRFSVRRVEKKDKTLVGFREQDPRFVADLSQCLTVIPEIGTKVEALSTFIESLDGKRDIPQIEFIAGDQAVVLTVRHLQPLSDADRAAWAAFGQQHGFVIYLQSGGVDTVQPLDGQGVPLSFRLAPWDVELAFRPLDFIQVNAKLNEKMIAHALDLLEPGEDERVLDLFCGLGNFTLPLARRVREVVGVEGDAGLVARARENAVRNGLANAQFFSADLTQDQRSTPWMRQGFDKLLLDPPRSGAIEVLQQLPLKQFKRIVYVSCHPGSLARDAGYLVNEQGFTLVSAGAMDMFPHTAHVESIAVFEKR.

The TRAM domain maps to 5-67 (RSRIDRTPFQ…RHFDEARTVE (63 aa)). The [4Fe-4S] cluster site is built by cysteine 80, cysteine 86, cysteine 89, and cysteine 168. Glutamine 276, phenylalanine 305, asparagine 310, glutamate 326, aspartate 353, and aspartate 374 together coordinate S-adenosyl-L-methionine. Catalysis depends on cysteine 400, which acts as the Nucleophile.

This sequence belongs to the class I-like SAM-binding methyltransferase superfamily. RNA M5U methyltransferase family. RlmD subfamily.

It catalyses the reaction uridine(1939) in 23S rRNA + S-adenosyl-L-methionine = 5-methyluridine(1939) in 23S rRNA + S-adenosyl-L-homocysteine + H(+). Its function is as follows. Catalyzes the formation of 5-methyl-uridine at position 1939 (m5U1939) in 23S rRNA. This is 23S rRNA (uracil(1939)-C(5))-methyltransferase RlmD from Stenotrophomonas maltophilia (strain K279a).